The primary structure comprises 199 residues: Thymidine kinase (199 aa).

ATP-binding positions include 15–22 (GSMFSGKS) and 88–91 (DEVQ). Glu-89 functions as the Proton acceptor in the catalytic mechanism. Cys-145, Cys-148, Cys-183, and His-186 together coordinate Zn(2+).

This sequence belongs to the thymidine kinase family. As to quaternary structure, homotetramer.

It localises to the cytoplasm. It carries out the reaction thymidine + ATP = dTMP + ADP + H(+). This is Thymidine kinase from Staphylococcus epidermidis (strain ATCC 12228 / FDA PCI 1200).